The primary structure comprises 156 residues: 6,7-dimethyl-8-ribityllumazine synthase (156 aa).

5-amino-6-(D-ribitylamino)uracil is bound by residues phenylalanine 23, 57–59 (AFE), and 81–83 (AII). 86-87 (ST) contacts (2S)-2-hydroxy-3-oxobutyl phosphate. Histidine 89 serves as the catalytic Proton donor. Residue phenylalanine 114 participates in 5-amino-6-(D-ribitylamino)uracil binding. (2S)-2-hydroxy-3-oxobutyl phosphate is bound at residue arginine 128.

The protein belongs to the DMRL synthase family.

The enzyme catalyses (2S)-2-hydroxy-3-oxobutyl phosphate + 5-amino-6-(D-ribitylamino)uracil = 6,7-dimethyl-8-(1-D-ribityl)lumazine + phosphate + 2 H2O + H(+). It functions in the pathway cofactor biosynthesis; riboflavin biosynthesis; riboflavin from 2-hydroxy-3-oxobutyl phosphate and 5-amino-6-(D-ribitylamino)uracil: step 1/2. Functionally, catalyzes the formation of 6,7-dimethyl-8-ribityllumazine by condensation of 5-amino-6-(D-ribitylamino)uracil with 3,4-dihydroxy-2-butanone 4-phosphate. This is the penultimate step in the biosynthesis of riboflavin. This is 6,7-dimethyl-8-ribityllumazine synthase from Wolinella succinogenes (strain ATCC 29543 / DSM 1740 / CCUG 13145 / JCM 31913 / LMG 7466 / NCTC 11488 / FDC 602W) (Vibrio succinogenes).